Reading from the N-terminus, the 307-residue chain is GTPase Era (307 aa).

Positions 17 to 186 (RCGFVAIVGR…LELIKPYLPE (170 aa)) constitute an Era-type G domain. The G1 stretch occupies residues 25-32 (GRPNVGKS). 25–32 (GRPNVGKS) provides a ligand contact to GTP. Positions 51–55 (QTTRN) are G2. The G3 stretch occupies residues 72–75 (DTPG). GTP-binding positions include 72-76 (DTPGF) and 133-136 (NKID). Residues 133–136 (NKID) form a G4 region. The interval 165–167 (VSA) is G5. The KH type-2 domain maps to 217 to 293 (LGEELPYAMN…FLKVWVKVKS (77 aa)).

It belongs to the TRAFAC class TrmE-Era-EngA-EngB-Septin-like GTPase superfamily. Era GTPase family. As to quaternary structure, monomer.

The protein localises to the cytoplasm. It is found in the cell inner membrane. Functionally, an essential GTPase that binds both GDP and GTP, with rapid nucleotide exchange. Plays a role in 16S rRNA processing and 30S ribosomal subunit biogenesis and possibly also in cell cycle regulation and energy metabolism. This chain is GTPase Era, found in Neisseria meningitidis serogroup A / serotype 4A (strain DSM 15465 / Z2491).